Reading from the N-terminus, the 1341-residue chain is MKRVFSLLEKSWLGAPIQFAWQKSSGNYLAVTGADYIVKIFDRHGQKRSEISLPGNCVTMDWDKDGDILAVIAEKSSCIYLWDANTNKTSQLDNGMRDQMSFLLWSKIGSFLAVGTIKGNLLIYNHQTSRKIPVLGKHTKKITCGCWNSENLLALGGEDKMITVSNQEGDTIRQTPVKSEPSDIKFSMSKTDERISSAENTISAVVGKKMLFLFHLNEPDNPVDLEFQQAYGNIVCYSWYGDGYIMIGFSRGTFLAISTHFPEVGQEIFKARDHKDNLTSVALSQTLNKAATCGDNCIKIHDLTELRDMYAIINLDDENKGLGTLSWTDDGQLLALSTQRGSLHVFLTKLPILGDACHTRIAYLTSLLEVTVANLIEGEPPITVSVDVEPTFVAVGLYHLAVGMNNRAWFYVLGENVVKKLKDVEYLGTVASICLHSDYAAALFEGKIQLHLIENEMLDAQEERETRLFPAVDDKCRILCHALTSDFLIYGTDTGIIHYFFIEDWQFVNDYRHPVGVKKLFPDPNGTRLVFIDEKSDGFVYCPVNDATYEIPDFSPTIKGVLWENWPMDKGVFIAYDDDKVYTYAFHKDTIQGSKVILAGSTKLPFSHKPLLLYNGELTCQTQSGKINSIYLSTHSFLGSMKDTEPTDLRQMLTQTLLLKRFSDAWDICKMLNDRTSWSELAKACLHHMEVEFAIRVSRTMGDVGTVMSLEQIKGIEDYNLLAGHLAMFTNDFNLAQDLYLASNCPVAALEMRRDLQHWDSALQLAKRLAPDQIPFISKEYAIQLEFTGDYVNALAHYEKGITGDNKEHDEVCLAGVAQMSIRMGDIRRGANQALKHPSRVLKRDCGAILENMKQFSEAAQLYEKGQYYDRAASVYIRCKNWAKVGELLPHVSSPKIHLQYAKAKEADGRYKEAVVAYENAKQWNSVIRIYLDHLNNPEKAVSIVRETQSLDGAKMVARFFLQLGDYGSAIQFLVLSKCNNEAFTLAQQHNKMEIYADIIGAEDTTNEDYQSIALYFEGEKRHFQAGKFFLLCGQYSRALKHFLKCPSSEDNVAIEMAIETVGQAKDELLTNQLIDHLMGESDGMPKDAKYLFRLYMALKQYREAARTAIIIAREEQSAGNYRNAHDVLFSMYAELKAQKIKIPSEMATNLMILHSYILVKIHVKSGDHMKGARMLIRVANNISKFPSHIVPILTSTVIECHRAGLKNSAFSFAAMLMRPEYRNKIDAKYKKKIEAMVRRPDTSETEEATTPCPFCQFLLPECELLCPGCKNNIPYCIATGRHMLKDDWTMCPHCGFPALYSEFKILLNSESTCPMCSERLNSSQLKKITDCSQYLRTEME.

WD repeat units lie at residues 11–51, 52–92, 95–134, 137–175, 273–311, and 317–356; these read SWLG…RSEI, SLPG…TSQL, GMRD…KIPV, KHTK…IRQT, DHKD…DMYA, and DENK…LGDA. TPR repeat units follow at residues 736-769, 775-808, 840-873, 895-928, 951-984, and 1020-1053; these read AQDL…AKRL, PFIS…DNKE, RVLK…DRAA, PKIH…NSVI, LDGA…NEAF, and EKRH…EDNV.

As to quaternary structure, component of the IFT complex A (IFT-A) complex. IFT-A complex is divided into a core subcomplex composed of IFT122:IFT140:WDR19 which is associated with TULP3 and a peripheral subcomplex composed of IFT43:WDR35:TTC21B. Interacts (via C-terminal region) with IFT122 (via C-terminal region). Interacts with BBS1. Interacts with TTC25. As to expression, tissue-specific expression of isoforms. Expressed in the prostate, testis, epididymis, submaxillary and salivary glands. Expressed in ependymal cells lining brain ventricles (at protein level).

The protein localises to the cell projection. The protein resides in the cilium. It is found in the cytoplasm. It localises to the cytoskeleton. Its subcellular location is the cilium basal body. The protein localises to the photoreceptor outer segment. The protein resides in the flagellum. Its function is as follows. As component of the IFT complex A (IFT-A), a complex required for retrograde ciliary transport and entry into cilia of G protein-coupled receptors (GPCRs), it is involved in cilia function and/or assembly. Essential for functional IFT-A assembly and ciliary entry of GPCRs. Associates with the BBSome complex to mediate ciliary transport. The protein is WD repeat-containing protein 19 of Mus musculus (Mouse).